A 273-amino-acid chain; its full sequence is Dermonecrotic toxin LapSicTox-alphaII1 (273 aa).

His5 is a catalytic residue. Residues Glu25 and Asp27 each coordinate Mg(2+). His41 acts as the Nucleophile in catalysis. Disulfide bonds link Cys45–Cys51 and Cys47–Cys191. Asp85 is a Mg(2+) binding site.

It belongs to the arthropod phospholipase D family. Class II subfamily. It depends on Mg(2+) as a cofactor. As to expression, expressed by the venom gland.

It localises to the secreted. It catalyses the reaction an N-(acyl)-sphingosylphosphocholine = an N-(acyl)-sphingosyl-1,3-cyclic phosphate + choline. It carries out the reaction an N-(acyl)-sphingosylphosphoethanolamine = an N-(acyl)-sphingosyl-1,3-cyclic phosphate + ethanolamine. The enzyme catalyses a 1-acyl-sn-glycero-3-phosphocholine = a 1-acyl-sn-glycero-2,3-cyclic phosphate + choline. The catalysed reaction is a 1-acyl-sn-glycero-3-phosphoethanolamine = a 1-acyl-sn-glycero-2,3-cyclic phosphate + ethanolamine. Its function is as follows. Dermonecrotic toxins cleave the phosphodiester linkage between the phosphate and headgroup of certain phospholipids (sphingolipid and lysolipid substrates), forming an alcohol (often choline) and a cyclic phosphate. This toxin acts on sphingomyelin (SM). It may also act on ceramide phosphoethanolamine (CPE), lysophosphatidylcholine (LPC) and lysophosphatidylethanolamine (LPE), but not on lysophosphatidylserine (LPS), and lysophosphatidylglycerol (LPG). It acts by transphosphatidylation, releasing exclusively cyclic phosphate products as second products. Induces dermonecrosis, hemolysis, increased vascular permeability, edema, inflammatory response, and platelet aggregation. The protein is Dermonecrotic toxin LapSicTox-alphaII1 of Loxosceles apachea (Apache recluse spider).